Reading from the N-terminus, the 160-residue chain is Cyclic pyranopterin monophosphate synthase (160 aa).

Residues 76-78 (MCH) and 113-114 (ME) each bind substrate. D128 is an active-site residue.

This sequence belongs to the MoaC family. In terms of assembly, homohexamer; trimer of dimers.

It carries out the reaction (8S)-3',8-cyclo-7,8-dihydroguanosine 5'-triphosphate = cyclic pyranopterin phosphate + diphosphate. Its pathway is cofactor biosynthesis; molybdopterin biosynthesis. In terms of biological role, catalyzes the conversion of (8S)-3',8-cyclo-7,8-dihydroguanosine 5'-triphosphate to cyclic pyranopterin monophosphate (cPMP). In Brevibacillus brevis (strain 47 / JCM 6285 / NBRC 100599), this protein is Cyclic pyranopterin monophosphate synthase.